A 114-amino-acid polypeptide reads, in one-letter code: Iron-sulfur cluster insertion protein ErpA (114 aa).

Positions 42, 106, and 108 each coordinate iron-sulfur cluster.

The protein belongs to the HesB/IscA family. Homodimer. Iron-sulfur cluster serves as cofactor.

Its function is as follows. Required for insertion of 4Fe-4S clusters for at least IspG. In Salmonella typhi, this protein is Iron-sulfur cluster insertion protein ErpA.